Reading from the N-terminus, the 217-residue chain is Large ribosomal subunit protein uL1 (217 aa).

The protein belongs to the universal ribosomal protein uL1 family. Part of the 50S ribosomal subunit.

Functionally, binds directly to 23S rRNA. Probably involved in E site tRNA release. In terms of biological role, protein L1 is also a translational repressor protein, it controls the translation of its operon by binding to its mRNA. The polypeptide is Large ribosomal subunit protein uL1 (Thermoplasma volcanium (strain ATCC 51530 / DSM 4299 / JCM 9571 / NBRC 15438 / GSS1)).